The primary structure comprises 908 residues: Chloride channel protein 2 (908 aa).

Over 1 to 95 (MAAATAAAAA…RCHKFLVSRV (95 aa)) the chain is Cytoplasmic. The interval 24–42 (QYEQTLMYGRYTQELGAFA) is essential for channel gating by both voltage and cell volume. Thr28 bears the Phosphothreonine mark. The modulates channel gating by both voltage and cell volume stretch occupies residues 44-57 (EEAARIRLGGPEPW). The next 2 membrane-spanning stretches (helical) occupy residues 96–129 (GEDW…AQQW) and 138–163 (ILLQ…TQIL). Positions 169–173 (GSGIP) match the Selectivity filter part_1 motif. Residue Ser170 participates in chloride binding. Residues 172-179 (IPEMKTIL) constitute an intramembrane region (helical). Helical transmembrane passes span 188-206 (LTLK…ALGS) and 213-231 (EGPF…SKFL). The Selectivity filter part_2 signature appears at 211-215 (GKEGP). Intramembrane regions (helical) lie at residues 247-259 (MLAA…VGCC) and 263-271 (PIGGVLFSI). A run of 5 helical transmembrane segments spans residues 283-303 (YWRG…LAVW), 329-357 (LPAF…VQVM), 366-385 (FLMR…ISTL), 437-457 (ANVF…SALA), and 465-488 (GAFM…MAAW). Residues 465-469 (GAFMP) carry the Selectivity filter part_3 motif. Phe467 contacts chloride. Positions 505-519 (GGYAVVGAAALAGAV) form an intramembrane region, helical. The note=Loop between two helices intramembrane region spans 520–521 (TH). The segment at residues 522 to 533 (TVSTAVIVFELT) is an intramembrane region (helical). Positions 534-538 (GQIAH) form an intramembrane region, note=Loop between two helices. The chain crosses the membrane as a helical span at residues 539-556 (ILPVMIAVILANAVAQSL). The Cytoplasmic portion of the chain corresponds to 557-908 (QPSLYDSIIR…TPSDSDDKCQ (352 aa)). Residue Tyr561 participates in chloride binding. Positions 592–650 (MVRDVPHVALSCTFRDLRLALHRTKGRMLALVESPESMILLGSIERSQVVALLGAQLSP) constitute a CBS 1 domain. Residues 653 to 662 (RRQHMQKLRK) show a composition bias toward basic residues. The disordered stretch occupies residues 653-722 (RRQHMQKLRK…NSTSLQEGTT (70 aa)). A compositionally biased stretch (low complexity) spans 666-680 (SPPSDQESPPSSETS). Residues 681–690 (IRFQVNTEDS) are compositionally biased toward polar residues. Positions 698-707 (QTHKPLKPAL) are enriched in basic residues. A compositionally biased stretch (polar residues) spans 711–722 (PSNSTSLQEGTT). At Ser768 the chain carries Phosphoserine. In terms of domain architecture, CBS 2 spans 800–860 (IDPAPFQLVE…GSVTAQGVKV (61 aa)). The Basolateral membrane sorting motif lies at 822-823 (LL). The interval 866–908 (SFRDSATSSSDTETTEVHALWGPRSRHGLPREGTPSDSDDKCQ) is disordered.

Belongs to the chloride channel (TC 2.A.49) family. ClC-2/CLCN2 subfamily. In terms of assembly, homodimer. Interacts with auxiliary subunit HEPACAM. In terms of processing, phosphorylated. Activated by dephosphorylation. In terms of tissue distribution, expressed in the adrenal gland and brain. Expressed in intestinal epithelium (at protein level). Expressed in salivary gland (at protein level).

It is found in the cell membrane. The protein resides in the myelin membrane. The protein localises to the basolateral cell membrane. Its subcellular location is the cell projection. It localises to the dendritic spine membrane. It is found in the axon. The enzyme catalyses chloride(in) = chloride(out). It carries out the reaction thiocyanate(in) = thiocyanate(out). It catalyses the reaction bromide(in) = bromide(out). The catalysed reaction is nitrate(in) = nitrate(out). The enzyme catalyses iodide(out) = iodide(in). Common gate kinetics are down-regulated by intracellular ATP. Inhibited by AK-42, a derivative of meclofenamate. Inhibited by Cd(2+). Inhibited by Zn(2+) and PKC activation. Inhibited at acidic pH. CCLN2:HEPACAM channel conductance is up-regulated upon hypo-osmolarity. In terms of biological role, voltage-gated and osmosensitive chloride channel. Forms a homodimeric channel where each subunit has its own ion conduction pathway. Conducts double-barreled currents controlled by two types of gates, two fast glutamate gates that control each subunit independently and a slow common gate that opens and shuts off both subunits simultaneously. Displays inward rectification currents activated upon membrane hyperpolarization and extracellular hypotonicity. Contributes to chloride conductance involved in neuron excitability. In hippocampal neurons, generates a significant part of resting membrane conductance and provides an additional chloride efflux pathway to prevent chloride accumulation in dendrites upon GABA receptor activation. In glia, associates with the auxiliary subunit HEPACAM/GlialCAM at astrocytic processes and myelinated fiber tracts where it may regulate transcellular chloride flux buffering extracellular chloride and potassium concentrations. Regulates aldosterone production in adrenal glands. The opening of CLCN2 channels at hyperpolarized membrane potentials in the glomerulosa causes cell membrane depolarization, activation of voltage-gated calcium channels and increased expression of aldosterone synthase, the rate-limiting enzyme for aldosterone biosynthesis. Contributes to chloride conductance in retinal pigment epithelium involved in phagocytosis of shed photoreceptor outer segments and photoreceptor renewal. Conducts chloride currents at the basolateral membrane of epithelial cells with a role in chloride reabsorption rather than secretion. Permeable to small monovalent anions with chloride &gt; thiocyanate &gt; bromide &gt; nitrate &gt; iodide ion selectivity. The chain is Chloride channel protein 2 (Clcn2) from Mus musculus (Mouse).